A 314-amino-acid chain; its full sequence is Leucine-rich repeat-containing protein 59 (314 aa).

The Cytoplasmic portion of the chain corresponds to 1–247 (MNKGKIENIK…VPKAKRSICS (247 aa)). 5 LRR repeats span residues 14-35 (DGNE…ELAA), 38-60 (KATF…CSLT), 61-82 (HLIK…IGQL), 84-106 (NLQH…SQLK), and 107-126 (SLKW…AKAA). Residues 146–216 (MKVLQEEAEK…AVAAQEQQKK (71 aa)) adopt a coiled-coil conformation. 2 disordered regions span residues 165 to 197 (REQE…KERK) and 212 to 237 (EQQK…APES). The span at 215-225 (KKKKEEKKKKA) shows a compositional bias: basic residues. The chain crosses the membrane as a helical span at residues 248–268 (LFFSLLLKLVLLLVIGVSSVV). Residues 269–314 (AVCQLTELRKEAFCIPLNVHFEETVRWAQGLDVVQQVIQKMSDLRT) lie on the Lumenal side of the membrane.

In terms of assembly, interacts with SGO1.

The protein localises to the microsome membrane. The protein resides in the endoplasmic reticulum membrane. It localises to the nucleus envelope. Its function is as follows. Required for nuclear import of FGF1. The protein is Leucine-rich repeat-containing protein 59 (lrrc59) of Danio rerio (Zebrafish).